Reading from the N-terminus, the 209-residue chain is MADYLLNALQWIDGLGTWAAIAFMLLYTVATVVFLPGSILTLGAGVVFGVILGSIYVFIGATLGATAAFLVGRYLARGWVAKKIAGNQKFKAIDEAVGKEGLKIVILTRLSPVFPFNLLNYAYGITNVSLKDYVIGSLGMIPGTIMYVYIGSLAGSLATLGTATNQANPTLQWTIRIVGFIATVAVTIYVTKIARKALNEAILTSEVDE.

A run of 5 helical transmembrane segments spans residues 15–35, 39–59, 110–130, 134–154, and 171–191; these read LGTWAAIAFMLLYTVATVVFL, ILTLGAGVVFGVILGSIYVFI, LSPVFPFNLLNYAYGITNVSL, VIGSLGMIPGTIMYVYIGSLA, and LQWTIRIVGFIATVAVTIYVT.

The protein belongs to the TVP38/TMEM64 family.

It is found in the cell membrane. The polypeptide is TVP38/TMEM64 family membrane protein slr0305 (Synechocystis sp. (strain ATCC 27184 / PCC 6803 / Kazusa)).